The following is a 323-amino-acid chain: MSSKPPAIFLMGPTAAGKTDLAIELTKVLPCELISVDSALVYRGMDIGSAKPSKEILAAHPHRLIDIRDPAESYSAAQFRADALEAMAEITARGKIPLLVGGTMLYYKALIDGLADMPAADAAVRAELEAQAEALGLAELHRQLAEVDPVSAARIHPNDPQRLIRALEVYRVSGESMTAHRQRQFAESRGADAGAGGHLPYTVASLAIAPTDRHILHQRIALRFSQMLEQGFVEEVRSLRARSDLHAGLPSIRAVGYRQVWDYLDGKLTENEMRERGIIATRQLAKRQFTWLRGWPEVHWLDSLACDNLSRTLKYLGAISILS.

An ATP-binding site is contributed by Gly12–Thr19. Thr14 to Thr19 is a substrate binding site. 2 interaction with substrate tRNA regions span residues Asp37 to Leu40 and Gln161 to Arg165.

The protein belongs to the IPP transferase family. In terms of assembly, monomer. Requires Mg(2+) as cofactor.

It catalyses the reaction adenosine(37) in tRNA + dimethylallyl diphosphate = N(6)-dimethylallyladenosine(37) in tRNA + diphosphate. Catalyzes the transfer of a dimethylallyl group onto the adenine at position 37 in tRNAs that read codons beginning with uridine, leading to the formation of N6-(dimethylallyl)adenosine (i(6)A). The protein is tRNA dimethylallyltransferase of Pseudomonas putida (strain GB-1).